The following is a 66-amino-acid chain: Large ribosomal subunit protein uL29 (66 aa).

The protein belongs to the universal ribosomal protein uL29 family.

The polypeptide is Large ribosomal subunit protein uL29 (Rhizobium rhizogenes (strain K84 / ATCC BAA-868) (Agrobacterium radiobacter)).